Consider the following 156-residue polypeptide: Small ribosomal subunit protein uS7 (156 aa).

The protein belongs to the universal ribosomal protein uS7 family. In terms of assembly, part of the 30S ribosomal subunit. Contacts proteins S9 and S11.

One of the primary rRNA binding proteins, it binds directly to 16S rRNA where it nucleates assembly of the head domain of the 30S subunit. Is located at the subunit interface close to the decoding center, probably blocks exit of the E-site tRNA. This is Small ribosomal subunit protein uS7 from Rhizobium leguminosarum bv. trifolii (strain WSM2304).